A 157-amino-acid chain; its full sequence is UPF0262 protein amb3341 (157 aa).

This sequence belongs to the UPF0262 family.

In Paramagnetospirillum magneticum (strain ATCC 700264 / AMB-1) (Magnetospirillum magneticum), this protein is UPF0262 protein amb3341.